The primary structure comprises 428 residues: Serine--tRNA ligase (428 aa).

231–233 (TSE) serves as a coordination point for L-serine. ATP is bound by residues 262-264 (RRE) and Val-278. Glu-285 contacts L-serine. Position 349–352 (349–352 (ELTS)) interacts with ATP. Thr-384 is an L-serine binding site.

Belongs to the class-II aminoacyl-tRNA synthetase family. Type-1 seryl-tRNA synthetase subfamily. In terms of assembly, homodimer. The tRNA molecule binds across the dimer.

The protein localises to the cytoplasm. The catalysed reaction is tRNA(Ser) + L-serine + ATP = L-seryl-tRNA(Ser) + AMP + diphosphate + H(+). It carries out the reaction tRNA(Sec) + L-serine + ATP = L-seryl-tRNA(Sec) + AMP + diphosphate + H(+). It functions in the pathway aminoacyl-tRNA biosynthesis; selenocysteinyl-tRNA(Sec) biosynthesis; L-seryl-tRNA(Sec) from L-serine and tRNA(Sec): step 1/1. Its function is as follows. Catalyzes the attachment of serine to tRNA(Ser). Is also able to aminoacylate tRNA(Sec) with serine, to form the misacylated tRNA L-seryl-tRNA(Sec), which will be further converted into selenocysteinyl-tRNA(Sec). The protein is Serine--tRNA ligase of Bifidobacterium longum (strain NCC 2705).